The chain runs to 165 residues: MPSSYSFDVVSEFDQQELVNAIDQLRREVDQRYDLKDSKTKIDIKEDELSIVSLSDMTIESVKDILLQKATKRNLSLKIFDFQKIETIGGNMVMQIVKLKKGLSQEISKKLSKLVRDNMKKVTASIQGDSLRITGKNKDDLQAAINLIKKQEEEFDIALQFQNYR.

This sequence belongs to the YajQ family.

Nucleotide-binding protein. The protein is Nucleotide-binding protein PMN2A_1813 of Prochlorococcus marinus (strain NATL2A).